Reading from the N-terminus, the 390-residue chain is D-alanyl-D-alanine carboxypeptidase DacD (390 aa).

Positions 1–23 (MLLKRRLFIAASLFAMHLSPALA) are cleaved as a signal peptide. The Acyl-ester intermediate role is filled by Ser65. Lys68 serves as the catalytic Proton acceptor. The active site involves Ser131. Lys234 provides a ligand contact to substrate.

Belongs to the peptidase S11 family.

It localises to the cell inner membrane. It carries out the reaction Preferential cleavage: (Ac)2-L-Lys-D-Ala-|-D-Ala. Also transpeptidation of peptidyl-alanyl moieties that are N-acyl substituents of D-alanine.. It functions in the pathway cell wall biogenesis; peptidoglycan biosynthesis. Functionally, removes C-terminal D-alanyl residues from sugar-peptide cell wall precursors. The protein is D-alanyl-D-alanine carboxypeptidase DacD (dacD) of Salmonella typhimurium (strain LT2 / SGSC1412 / ATCC 700720).